Reading from the N-terminus, the 256-residue chain is 5-keto-4-deoxy-D-glucarate aldolase (256 aa).

H50 functions as the Proton acceptor in the catalytic mechanism. Q151 is a substrate binding site. A Mg(2+)-binding site is contributed by E153. Substrate is bound by residues S178 and D179. Mg(2+) is bound at residue D179.

The protein belongs to the HpcH/HpaI aldolase family. KDGluc aldolase subfamily. Homohexamer; trimer of dimers. Requires Mg(2+) as cofactor.

The catalysed reaction is 5-dehydro-4-deoxy-D-glucarate = 2-hydroxy-3-oxopropanoate + pyruvate. It carries out the reaction 2-dehydro-3-deoxy-D-glucarate = 2-hydroxy-3-oxopropanoate + pyruvate. It functions in the pathway carbohydrate acid metabolism; galactarate degradation; D-glycerate from galactarate: step 2/3. Functionally, catalyzes the reversible retro-aldol cleavage of both 5-keto-4-deoxy-D-glucarate and 2-keto-3-deoxy-D-glucarate to pyruvate and tartronic semialdehyde. The polypeptide is 5-keto-4-deoxy-D-glucarate aldolase (Salmonella arizonae (strain ATCC BAA-731 / CDC346-86 / RSK2980)).